The following is a 366-amino-acid chain: DNA replication and repair protein RecF (366 aa).

30–37 (GRNAQGKT) lines the ATP pocket.

Belongs to the RecF family.

Its subcellular location is the cytoplasm. Functionally, the RecF protein is involved in DNA metabolism; it is required for DNA replication and normal SOS inducibility. RecF binds preferentially to single-stranded, linear DNA. It also seems to bind ATP. This is DNA replication and repair protein RecF from Streptococcus thermophilus (strain CNRZ 1066).